A 313-amino-acid chain; its full sequence is NADH-ubiquinone oxidoreductase chain 1 (313 aa).

Helical transmembrane passes span Leu-5–Phe-25, Phe-75–Phe-95, Phe-104–Ala-124, Leu-151–Met-171, Leu-175–Leu-195, Leu-227–Phe-247, Asp-251–Val-271, and Pro-293–Ile-313.

It belongs to the complex I subunit 1 family.

The protein resides in the mitochondrion inner membrane. It carries out the reaction a ubiquinone + NADH + 5 H(+)(in) = a ubiquinol + NAD(+) + 4 H(+)(out). In terms of biological role, core subunit of the mitochondrial membrane respiratory chain NADH dehydrogenase (Complex I) that is believed to belong to the minimal assembly required for catalysis. Complex I functions in the transfer of electrons from NADH to the respiratory chain. The immediate electron acceptor for the enzyme is believed to be ubiquinone. The chain is NADH-ubiquinone oxidoreductase chain 1 (ND1) from Locusta migratoria (Migratory locust).